The chain runs to 157 residues: SsrA-binding protein (157 aa).

A disordered region spans residues 128–157; that stretch reads LARGKKQHDKRAAEKERDWEREKQRVMRRG. Residues 137 to 157 are compositionally biased toward basic and acidic residues; it reads KRAAEKERDWEREKQRVMRRG.

The protein belongs to the SmpB family.

The protein localises to the cytoplasm. Functionally, required for rescue of stalled ribosomes mediated by trans-translation. Binds to transfer-messenger RNA (tmRNA), required for stable association of tmRNA with ribosomes. tmRNA and SmpB together mimic tRNA shape, replacing the anticodon stem-loop with SmpB. tmRNA is encoded by the ssrA gene; the 2 termini fold to resemble tRNA(Ala) and it encodes a 'tag peptide', a short internal open reading frame. During trans-translation Ala-aminoacylated tmRNA acts like a tRNA, entering the A-site of stalled ribosomes, displacing the stalled mRNA. The ribosome then switches to translate the ORF on the tmRNA; the nascent peptide is terminated with the 'tag peptide' encoded by the tmRNA and targeted for degradation. The ribosome is freed to recommence translation, which seems to be the essential function of trans-translation. This Methylococcus capsulatus (strain ATCC 33009 / NCIMB 11132 / Bath) protein is SsrA-binding protein.